A 304-amino-acid chain; its full sequence is Glycine--tRNA ligase alpha subunit (304 aa).

Belongs to the class-II aminoacyl-tRNA synthetase family. In terms of assembly, tetramer of two alpha and two beta subunits.

It localises to the cytoplasm. The catalysed reaction is tRNA(Gly) + glycine + ATP = glycyl-tRNA(Gly) + AMP + diphosphate. This chain is Glycine--tRNA ligase alpha subunit, found in Streptococcus agalactiae serotype III (strain NEM316).